We begin with the raw amino-acid sequence, 152 residues long: MAVERTFVAIKPDGVQRGLVGEILGRFERKGFKLVGLKQLAPSRELAGEHYGVHRERPFFAGLVDFITSGPVVAMVWEGDGVIASARKLIGATKPLEAEPGTIRGDLAVNIGRNVIHGSDGPDTAQFEINLWFSPEELNAWTPSDQSWRVES.

Residues lysine 11, phenylalanine 59, arginine 87, threonine 93, arginine 104, and asparagine 114 each coordinate ATP. Residue histidine 117 is the Pros-phosphohistidine intermediate of the active site.

It belongs to the NDK family. In terms of assembly, homotetramer. Mg(2+) is required as a cofactor.

It is found in the cytoplasm. The catalysed reaction is a 2'-deoxyribonucleoside 5'-diphosphate + ATP = a 2'-deoxyribonucleoside 5'-triphosphate + ADP. It catalyses the reaction a ribonucleoside 5'-diphosphate + ATP = a ribonucleoside 5'-triphosphate + ADP. In terms of biological role, major role in the synthesis of nucleoside triphosphates other than ATP. The ATP gamma phosphate is transferred to the NDP beta phosphate via a ping-pong mechanism, using a phosphorylated active-site intermediate. This Prochlorococcus marinus (strain MIT 9303) protein is Nucleoside diphosphate kinase.